Reading from the N-terminus, the 229-residue chain is Thymidylate kinase (229 aa).

Residue 9–16 (GPEGSGKS) coordinates ATP.

This sequence belongs to the thymidylate kinase family.

It catalyses the reaction dTMP + ATP = dTDP + ADP. Functionally, phosphorylation of dTMP to form dTDP in both de novo and salvage pathways of dTTP synthesis. This is Thymidylate kinase from Roseiflexus castenholzii (strain DSM 13941 / HLO8).